The chain runs to 88 residues: Small ribosomal subunit protein bS20 (88 aa).

The segment covering 1–23 (MPNTKSAEKALRVADANRQENRR) has biased composition (basic and acidic residues). Disordered stretches follow at residues 1–28 (MPNT…KSQV) and 69–88 (PKNA…QAAK). The span at 71–81 (NAARRKSRLMK) shows a compositional bias: basic residues.

This sequence belongs to the bacterial ribosomal protein bS20 family.

Functionally, binds directly to 16S ribosomal RNA. This is Small ribosomal subunit protein bS20 from Dehalococcoides mccartyi (strain ATCC BAA-2266 / KCTC 15142 / 195) (Dehalococcoides ethenogenes (strain 195)).